Reading from the N-terminus, the 341-residue chain is Adenylosuccinate synthetase (341 aa).

GTP is bound by residues 12 to 18 (GDEGKGK) and 42 to 44 (GHS). The active-site Proton acceptor is D13. D13 and G42 together coordinate Mg(2+). Residues 13-16 (DEGK), 40-43 (NAGH), T127, R141, Q179, T194, and R256 contribute to the IMP site. Residue H43 is the Proton donor of the active site. 252–258 (VVTGRKR) provides a ligand contact to substrate. GTP is bound by residues R258, 284 to 286 (CID), and 324 to 326 (STG).

This sequence belongs to the adenylosuccinate synthetase family. Homodimer. The cofactor is Mg(2+).

The protein resides in the cytoplasm. The enzyme catalyses IMP + L-aspartate + GTP = N(6)-(1,2-dicarboxyethyl)-AMP + GDP + phosphate + 2 H(+). The protein operates within purine metabolism; AMP biosynthesis via de novo pathway; AMP from IMP: step 1/2. In terms of biological role, plays an important role in the de novo pathway of purine nucleotide biosynthesis. Catalyzes the first committed step in the biosynthesis of AMP from IMP. The protein is Adenylosuccinate synthetase of Methanosphaera stadtmanae (strain ATCC 43021 / DSM 3091 / JCM 11832 / MCB-3).